Consider the following 260-residue polypeptide: 1-(5-phosphoribosyl)-5-[(5-phosphoribosylamino)methylideneamino] imidazole-4-carboxamide isomerase (260 aa).

Aspartate 8 functions as the Proton acceptor in the catalytic mechanism. The Proton donor role is filled by aspartate 130.

Belongs to the HisA/HisF family.

It is found in the cytoplasm. It catalyses the reaction 1-(5-phospho-beta-D-ribosyl)-5-[(5-phospho-beta-D-ribosylamino)methylideneamino]imidazole-4-carboxamide = 5-[(5-phospho-1-deoxy-D-ribulos-1-ylimino)methylamino]-1-(5-phospho-beta-D-ribosyl)imidazole-4-carboxamide. The protein operates within amino-acid biosynthesis; L-histidine biosynthesis; L-histidine from 5-phospho-alpha-D-ribose 1-diphosphate: step 4/9. The sequence is that of 1-(5-phosphoribosyl)-5-[(5-phosphoribosylamino)methylideneamino] imidazole-4-carboxamide isomerase from Chlorobium phaeobacteroides (strain BS1).